Consider the following 499-residue polypeptide: Cytochrome P450 710A2 (499 aa).

Residues valine 5–isoleucine 25 traverse the membrane as a helical segment. Cysteine 439 provides a ligand contact to heme.

This sequence belongs to the cytochrome P450 family. Requires heme as cofactor. As to expression, expressed in the vascular tissues of roots, shoots, stems and leaves. Expressed in root tips, carpes, siliques and seeds.

The protein localises to the membrane. It carries out the reaction 5-dehydroepisterol + NADPH + O2 + H(+) = ergosta-5,7,22,24(28)-tetraen-3beta-ol + NADP(+) + 2 H2O. It participates in steroid biosynthesis; sterol biosynthesis. In terms of biological role, required to form the C-22 double bond in the sterol side chain. Possesses in vitro C-22 desaturase activity toward 24-epi-campesterol and beta-sitosterol and produces brassicasterol and stigmasterol, respectively. No activity with campesterol. This Arabidopsis thaliana (Mouse-ear cress) protein is Cytochrome P450 710A2.